A 309-amino-acid polypeptide reads, in one-letter code: MRRITPFFPFFVLLVSHFSLAISYPLPPEGSRLVGQPVTIAVPQNNTQPLESFAARYGQGLSNMLEANPGVDVFLPQSGSTLVVPQQLILPDTVREGIVVNVAEMRLYYYPAGTNTVEVLPIGIGQAGRETPRNWVTAVERKQDGPVWVPTANTRREYAKEGKTLPAMVPAGPDNPMGLYAIYIGRLYAIHGTNANFGIGLRVSQGCIRLRNDDIKYLFDHVPVGTRVQIIDRPVKFSVEPDGSRWLEVHEPLSRNRAEFESDKKVPLPVTPVLRTFIKGDDVDTSRVNEVLERRSGMPVNISAGRPGL.

The first 21 residues, 1–21, serve as a signal peptide directing secretion; it reads MRRITPFFPFFVLLVSHFSLA. One can recognise a L,D-TPase catalytic domain in the interval 96–231; sequence EGIVVNVAEM…VPVGTRVQII (136 aa). The Proton donor/acceptor role is filled by H191. The active-site Nucleophile is C207.

The protein belongs to the YkuD family.

It localises to the periplasm. Its pathway is cell wall biogenesis; peptidoglycan biosynthesis. The protein is Probable L,D-transpeptidase ErfK/SrfK (erfK) of Salmonella typhimurium (strain LT2 / SGSC1412 / ATCC 700720).